The following is a 444-amino-acid chain: N-succinylarginine dihydrolase (444 aa).

Substrate-binding positions include 19-28 (SGLSVGNIAS), Asn110, and 137-138 (HR). Glu174 is a catalytic residue. Arg214 contacts substrate. His250 is a catalytic residue. Substrate is bound by residues Asp252 and Asn362. The active-site Nucleophile is Cys368.

The protein belongs to the succinylarginine dihydrolase family. Homodimer.

It catalyses the reaction N(2)-succinyl-L-arginine + 2 H2O + 2 H(+) = N(2)-succinyl-L-ornithine + 2 NH4(+) + CO2. It functions in the pathway amino-acid degradation; L-arginine degradation via AST pathway; L-glutamate and succinate from L-arginine: step 2/5. In terms of biological role, catalyzes the hydrolysis of N(2)-succinylarginine into N(2)-succinylornithine, ammonia and CO(2). This is N-succinylarginine dihydrolase from Aliivibrio salmonicida (strain LFI1238) (Vibrio salmonicida (strain LFI1238)).